Consider the following 282-residue polypeptide: Pantothenate synthetase (282 aa).

26 to 33 (MGNLHEGH) is a binding site for ATP. His33 (proton donor) is an active-site residue. Residue Gln57 coordinates (R)-pantoate. Gln57 lines the beta-alanine pocket. 144–147 (GKKD) is a binding site for ATP. Gln150 contributes to the (R)-pantoate binding site. Residues Val173 and 181–184 (LSSR) contribute to the ATP site.

The protein belongs to the pantothenate synthetase family. Homodimer.

It localises to the cytoplasm. It catalyses the reaction (R)-pantoate + beta-alanine + ATP = (R)-pantothenate + AMP + diphosphate + H(+). It functions in the pathway cofactor biosynthesis; (R)-pantothenate biosynthesis; (R)-pantothenate from (R)-pantoate and beta-alanine: step 1/1. Its function is as follows. Catalyzes the condensation of pantoate with beta-alanine in an ATP-dependent reaction via a pantoyl-adenylate intermediate. The sequence is that of Pantothenate synthetase from Cupriavidus taiwanensis (strain DSM 17343 / BCRC 17206 / CCUG 44338 / CIP 107171 / LMG 19424 / R1) (Ralstonia taiwanensis (strain LMG 19424)).